The primary structure comprises 208 residues: Ribosomal RNA large subunit methyltransferase E (208 aa).

S-adenosyl-L-methionine is bound by residues Gly-63, Trp-65, Asp-83, Asp-99, and Asp-124. Catalysis depends on Lys-164, which acts as the Proton acceptor.

The protein belongs to the class I-like SAM-binding methyltransferase superfamily. RNA methyltransferase RlmE family.

It is found in the cytoplasm. It carries out the reaction uridine(2552) in 23S rRNA + S-adenosyl-L-methionine = 2'-O-methyluridine(2552) in 23S rRNA + S-adenosyl-L-homocysteine + H(+). In terms of biological role, specifically methylates the uridine in position 2552 of 23S rRNA at the 2'-O position of the ribose in the fully assembled 50S ribosomal subunit. This is Ribosomal RNA large subunit methyltransferase E from Salmonella typhi.